Reading from the N-terminus, the 384-residue chain is F-box/kelch-repeat protein At3g44120 (384 aa).

One can recognise an F-box domain in the interval 1 to 46 (MTLPELPKDLVEEILCFVPATSLKRLRSSCKEWNRLFKDDKRFARK). Kelch repeat units follow at residues 156–202 (CNKS…RECF), 264–314 (SVLV…FLLD), and 352–384 (GVQT…KRDY).

In Arabidopsis thaliana (Mouse-ear cress), this protein is F-box/kelch-repeat protein At3g44120.